The primary structure comprises 195 residues: Protein GrpE (195 aa).

The segment covering 1–14 (MQEPHDQEPIEKQK) has biased composition (basic and acidic residues). The tract at residues 1–45 (MQEPHDQEPIEKQKLPGMDDVLETEHSGTVAGNTERAGEDAAPSL) is disordered.

Belongs to the GrpE family. In terms of assembly, homodimer.

Its subcellular location is the cytoplasm. Functionally, participates actively in the response to hyperosmotic and heat shock by preventing the aggregation of stress-denatured proteins, in association with DnaK and GrpE. It is the nucleotide exchange factor for DnaK and may function as a thermosensor. Unfolded proteins bind initially to DnaJ; upon interaction with the DnaJ-bound protein, DnaK hydrolyzes its bound ATP, resulting in the formation of a stable complex. GrpE releases ADP from DnaK; ATP binding to DnaK triggers the release of the substrate protein, thus completing the reaction cycle. Several rounds of ATP-dependent interactions between DnaJ, DnaK and GrpE are required for fully efficient folding. The protein is Protein GrpE of Nitrosomonas europaea (strain ATCC 19718 / CIP 103999 / KCTC 2705 / NBRC 14298).